The primary structure comprises 554 residues: MSSPPQAVASLTERIKTLLESNFCQIIVKGELSNVSLQPSGHLYFGIKDSQAFLNGAFFHFKSKYYDRKPKDGDAVIIHGKLAVYAPRGQYQIVAHALVYAGEGDLLQKFEETKRRLTAEGYFATEKKKPLPFAPQCIGVITSPTGAVIQDILRVLSRRARNYKILVYPVTVQGNSAAHEISKAIEVMNAENLADVLIIARGGGSIEDLWAFNEEILVKAIHASTIPIVSAVGHETDYTLCDFASDVRAPTPSAAAEIVCKSSEEQVQVFEGYLRHLLSHSRQLLTSKKQQLLPWRRFLDRAEFYTTAQQQLDSIEIAIQKGVQGKIHESKQRYDNISRWLQGDLVSRMTCRLQSLKKMLSQALSHKALSLQVRCHQLKKSLTYPRQIQQASQKLSPWRQQLDTLISRRLHYQKEEYFHKHTRLKHAHNVLEQQLRSHVQKLELLGRRLSRGCELNLQNQKIAYANVKETLATILERRYENSVARYSALKEQLHSLNPKNVLKRGYAMLFDFNENSAMISVDSLQENARVRIQLQDGEAILTVTNIEICKLIKG.

Belongs to the XseA family. As to quaternary structure, heterooligomer composed of large and small subunits.

Its subcellular location is the cytoplasm. The catalysed reaction is Exonucleolytic cleavage in either 5'- to 3'- or 3'- to 5'-direction to yield nucleoside 5'-phosphates.. Functionally, bidirectionally degrades single-stranded DNA into large acid-insoluble oligonucleotides, which are then degraded further into small acid-soluble oligonucleotides. This is Exodeoxyribonuclease 7 large subunit from Chlamydia pneumoniae (Chlamydophila pneumoniae).